A 365-amino-acid polypeptide reads, in one-letter code: MIGPEHEFSINDENFNPVPISDEILKKIGGRTVNEAKLGRVVIGKELQKHVIELKPARPFESLSEFEETMQEGVEELLSVMDGYKLLGLGMHPLLRLEDAKVWNHRDRRIYQAYDRLFNIKQHGWLNIQSYQLNIPFSSEKEAVELHNKIRVLLPYIAAVASASPICEGKSYYVDTRLYFYRINQKEVPEICNDVIPERISSLKEYRSILNGIYEELRRKGAYVLCREWVNSRGVIVRFSRKCLEIKVMDEQECIKSDVALTAFIRAILRAELEELPVDVLIEKLNSAMRSGTEKLKPELKELLKKSKEHADEEERRYMKVVKLRIEEGSLGERILMNMPEISREEIISLCEELSRCLERNEVYL.

This is an uncharacterized protein from Archaeoglobus fulgidus (strain ATCC 49558 / DSM 4304 / JCM 9628 / NBRC 100126 / VC-16).